The primary structure comprises 278 residues: Protoheme IX farnesyltransferase 1 (278 aa).

Helical transmembrane passes span 12-32, 35-55, 76-96, 98-118, 129-149, 158-178, 199-221, 226-248, and 255-275; these read VIWL…GGVD, LFSL…FNHY, LITP…GISL, FLLL…FYAV, WLNI…GYAL, AVLI…ALAF, ERAV…WLYL, GAGG…YAAV, and MWKM…ALIL.

Belongs to the UbiA prenyltransferase family. Protoheme IX farnesyltransferase subfamily.

Its subcellular location is the cell membrane. It carries out the reaction heme b + (2E,6E)-farnesyl diphosphate + H2O = Fe(II)-heme o + diphosphate. Its pathway is porphyrin-containing compound metabolism; heme O biosynthesis; heme O from protoheme: step 1/1. Functionally, converts heme B (protoheme IX) to heme O by substitution of the vinyl group on carbon 2 of heme B porphyrin ring with a hydroxyethyl farnesyl side group. The polypeptide is Protoheme IX farnesyltransferase 1 (Pyrobaculum aerophilum (strain ATCC 51768 / DSM 7523 / JCM 9630 / CIP 104966 / NBRC 100827 / IM2)).